We begin with the raw amino-acid sequence, 137 residues long: Large ribosomal subunit protein bL17 (137 aa).

This sequence belongs to the bacterial ribosomal protein bL17 family. As to quaternary structure, part of the 50S ribosomal subunit. Contacts protein L32.

The sequence is that of Large ribosomal subunit protein bL17 from Rickettsia typhi (strain ATCC VR-144 / Wilmington).